Reading from the N-terminus, the 254-residue chain is Esterase YbfF (254 aa).

Active-site residues include S89 and H234.

The protein belongs to the DmpD/TodF/XylF esterase family.

In terms of biological role, displays esterase activity toward palmitoyl-CoA, malonyl-CoA and pNP-butyrate. In Escherichia coli (strain K12), this protein is Esterase YbfF (ybfF).